The primary structure comprises 511 residues: MTTHAAEAPTTDPQGAPGSQKTPDATEAEEAARATVPHRAAAAALAREHDVVPLHQEFLDDSVSPVTAFAQLCGPDEAGFLLESVPVSGGVARYSYVGHRPVPLEPTGGDPLTALRSHLARSVAPVPGLPPFHGGVVGYLGYEAARHFEDLPLAAGPPPGLPESAFLAADDLVVFDHATRRVLLMTLYRPARESYDDAVARIVRLNRALRRAPAPAAFSGRPLAAATPADHGTQGWTANLTEAQFTERVARAREHIAAGDAFQIVLSRRLSRPLRARPTDLYRHLRATNPSPYMYHLSLGGGRHVIGASPELLVKAEGRTVRTRPLAGTRPRHPDPAEDLRLERELRADEKERAEHVMLVDLGRNDLGRVTEPGTVRVERLMRVERFSHVMHLSSTVRGRLAEGRDALDALRSAFPAGTLSGAPKIRAMEIIAELEPEQRGVYGGALGFVGADGLTDFAIALRTMVVADGHVHVQAGAGIVADSDPAAEFRETLHKSRAMLTAVRRAEAAA.

The disordered stretch occupies residues 1-36 (MTTHAAEAPTTDPQGAPGSQKTPDATEAEEAARATV). Positions 11-23 (TDPQGAPGSQKTP) are enriched in polar residues. L-tryptophan is bound by residues S84 and 292–294 (PYM). 328-329 (GT) lines the chorismate pocket. A Mg(2+)-binding site is contributed by E355. Chorismate contacts are provided by residues Y443, R463, 477–479 (GAG), and G479. Position 492 (E492) interacts with Mg(2+).

It belongs to the anthranilate synthase component I family. As to quaternary structure, heterotetramer consisting of two non-identical subunits: a beta subunit (TrpG) and a large alpha subunit (TrpE). Mg(2+) serves as cofactor.

It carries out the reaction chorismate + L-glutamine = anthranilate + pyruvate + L-glutamate + H(+). Its pathway is amino-acid biosynthesis; L-tryptophan biosynthesis; L-tryptophan from chorismate: step 1/5. Feedback inhibited by tryptophan. Functionally, part of a heterotetrameric complex that catalyzes the two-step biosynthesis of anthranilate, an intermediate in the biosynthesis of L-tryptophan. In the first step, the glutamine-binding beta subunit (TrpG) of anthranilate synthase (AS) provides the glutamine amidotransferase activity which generates ammonia as a substrate that, along with chorismate, is used in the second step, catalyzed by the large alpha subunit of AS (TrpE) to produce anthranilate. In the absence of TrpG, TrpE can synthesize anthranilate directly from chorismate and high concentrations of ammonia. The polypeptide is Anthranilate synthase component 1 (trpE) (Streptomyces coelicolor (strain ATCC BAA-471 / A3(2) / M145)).